Reading from the N-terminus, the 828-residue chain is USP6 N-terminal-like protein (828 aa).

Met1 is subject to N-acetylmethionine. Residues 100–292 (GIPLQLRGEV…RIWDIYIFEG (193 aa)) form the Rab-GAP TBC domain. Over residues 355-367 (DLPEPGKEDEYPK) the composition is skewed to basic and acidic residues. Residues 355 to 722 (DLPEPGKEDE…NSGSPKNGKL (368 aa)) form a disordered region. 3 positions are modified to phosphoserine: Ser391, Ser396, and Ser400. Basic and acidic residues predominate over residues 434 to 451 (KSVEEESKKLKDEADFQR). Residues 465–478 (NHAAANQNSNATSN) show a composition bias toward low complexity. Basic and acidic residues-rich tracts occupy residues 498 to 508 (RTAKYTMEGKG) and 535 to 544 (KALDAEDGKR). Phosphoserine occurs at positions 546 and 549. Residue Tyr582 is modified to Phosphotyrosine. Phosphoserine is present on Ser585. Residues 592-603 (PSSSPSKVSNKF) show a composition bias toward polar residues. A phosphoserine mark is found at Ser642, Ser655, Ser659, Ser676, and Ser680. Composition is skewed to polar residues over residues 648–666 (TANS…QLNP) and 673–683 (STLSVSASPEK). Positions 686–697 (SRPSPLVLPSSR) are enriched in low complexity. Ser716 is subject to Phosphoserine. Tyr729 carries the post-translational modification Phosphotyrosine. The tract at residues 789 to 817 (KASPAAEDASPSGYPYSGPPPPAYHYRNR) is disordered.

In terms of assembly, interacts with EPS8. In terms of tissue distribution, widely expressed.

It localises to the golgi apparatus. Its subcellular location is the cytoplasmic vesicle. Its function is as follows. Acts as a GTPase-activating protein for RAB5A and RAB43. Involved in receptor trafficking. In complex with EPS8 inhibits internalization of EGFR. Involved in retrograde transport from the endocytic pathway to the Golgi apparatus. Involved in the transport of Shiga toxin from early and recycling endosomes to the trans-Golgi network. Required for structural integrity of the Golgi complex. The chain is USP6 N-terminal-like protein (USP6NL) from Homo sapiens (Human).